We begin with the raw amino-acid sequence, 339 residues long: tRNA N6-adenosine threonylcarbamoyltransferase (339 aa).

Residues histidine 111 and histidine 115 each contribute to the Fe cation site. Residues 134–138 (LVSGG), aspartate 167, glycine 180, and asparagine 274 contribute to the substrate site. Aspartate 302 contacts Fe cation.

This sequence belongs to the KAE1 / TsaD family. It depends on Fe(2+) as a cofactor.

The protein resides in the cytoplasm. The catalysed reaction is L-threonylcarbamoyladenylate + adenosine(37) in tRNA = N(6)-L-threonylcarbamoyladenosine(37) in tRNA + AMP + H(+). Functionally, required for the formation of a threonylcarbamoyl group on adenosine at position 37 (t(6)A37) in tRNAs that read codons beginning with adenine. Is involved in the transfer of the threonylcarbamoyl moiety of threonylcarbamoyl-AMP (TC-AMP) to the N6 group of A37, together with TsaE and TsaB. TsaD likely plays a direct catalytic role in this reaction. The polypeptide is tRNA N6-adenosine threonylcarbamoyltransferase (Methylobacillus flagellatus (strain ATCC 51484 / DSM 6875 / VKM B-1610 / KT)).